The following is a 271-amino-acid chain: Insulin-like growth factor-binding protein 5 (271 aa).

The first 19 residues, 1–19, serve as a signal peptide directing secretion; the sequence is MVLTAVLLLLAACAGSAQG. The region spanning 22–102 is the IGFBP N-terminal domain; the sequence is SFVHCEPCDE…LHGRGVCLNE (81 aa). Cystine bridges form between Cys26-Cys52, Cys29-Cys54, Cys37-Cys55, Cys44-Cys58, Cys66-Cys79, and Cys73-Cys99. Over residues 109–121 the composition is skewed to basic and acidic residues; the sequence is AKIERDSREHEEP. The segment at 109-129 is disordered; that stretch reads AKIERDSREHEEPTTSEMAEE. Position 115 is a phosphoserine (Ser115). Positions 188–262 constitute a Thyroglobulin type-1 domain; sequence QGPCRRHMEA…MEYVDGDFQC (75 aa). 3 disulfides stabilise this stretch: Cys191–Cys218, Cys229–Cys240, and Cys242–Cys262.

Interacts with IGF1; this interaction enhances the growth stimulatory effects of IGF1 on fibroblasts. Interacts with CAV1; this interaction allows trafficking of IGFBP5 from the plasma membrane to the nucleus. Interacts with NCL; this interaction is necessary for IGFBP5 localization to the nucleus.

It localises to the secreted. Its subcellular location is the cytoplasm. It is found in the nucleus. In terms of biological role, multifunctional protein that plays a critical role in regulating the availability of IGFs to their receptors and thereby regulates IGF-mediated cellular processes including proliferation, differentiation, and apoptosis in a cell-type specific manner. Increases the cell proliferation of osteoblasts, intestinal smooth muscle cells and neuroblastoma cells. Enhances adhesion and survival of epithelial cells but decreases adhesion of mesenchymal cells. Once secreted, acts as a major mediator of mTORC1-dependent feedback inhibition of IGF1 signaling. Also plays a role in the induction of extracellular matrix (ECM) production and deposition independently of its nuclear translocation and binding to IGFs. Acts itself as a growth factor that can act independently of IGFs to regulate bone formation. Acts as a ligand for the ROR1 receptor which triggers formation of ROR1/HER2 heterodimer to enhance CREB oncogenic signaling. This chain is Insulin-like growth factor-binding protein 5 (IGFBP5), found in Bos taurus (Bovine).